We begin with the raw amino-acid sequence, 259 residues long: Global transcriptional regulator CodY (259 aa).

Positions 1–155 are GAF domain; it reads MTLLEKTRKI…GGTVVGMEIL (155 aa). A DNA-binding region (H-T-H motif) is located at residues 203-222; that stretch reads ASKIADRVGITRSVIVNALR.

It belongs to the CodY family.

The protein localises to the cytoplasm. Its function is as follows. DNA-binding global transcriptional regulator which is involved in the adaptive response to starvation and acts by directly or indirectly controlling the expression of numerous genes in response to nutrient availability. During rapid exponential growth, CodY is highly active and represses genes whose products allow adaptation to nutrient depletion. This is Global transcriptional regulator CodY from Listeria welshimeri serovar 6b (strain ATCC 35897 / DSM 20650 / CCUG 15529 / CIP 8149 / NCTC 11857 / SLCC 5334 / V8).